A 134-amino-acid chain; its full sequence is Arsenate reductase (134 aa).

Residues cysteine 11, cysteine 83, and cysteine 90 each act as nucleophile in the active site. Disulfide bonds link cysteine 11-cysteine 83 and cysteine 83-cysteine 90.

This sequence belongs to the low molecular weight phosphotyrosine protein phosphatase family. Thioredoxin-coupled ArsC subfamily.

The protein resides in the cytoplasm. It catalyses the reaction arsenate + [thioredoxin]-dithiol + H(+) = arsenite + [thioredoxin]-disulfide + H2O. Catalyzes the reduction of arsenate [As(V)] to arsenite [As(III)]. This chain is Arsenate reductase, found in Brevibacillus brevis (strain 47 / JCM 6285 / NBRC 100599).